Consider the following 301-residue polypeptide: MKIAVLSRNPRLYSTRRLVEAGTQRGHEVVVIDTLRAYMNIASHKPQIHYRGKPLEGFDAVIPRIGASVTFYGCAVLRQFEMMGVYPLNESVAIARSRDKLRSLQLLSRRGIGLPITGFAHSPDDIPDLIQMVNGAPLVIKVLEGTQGIGVVLCETTKAAESVIEAFMGLKQNIMVQEYIKEAGGADIRCFVVGDKVIASMKRQAKPGEFRSNLHRGGVASLIKITPEERMTAIRAAKVMGLSVAGVDILRSNHGPLVMEVNSSPGLEGIEVTTGKDVAGMIIEHLEKNSGPNQTRTKGKG.

Residues 104 to 287 enclose the ATP-grasp domain; sequence LQLLSRRGIG…VAGMIIEHLE (184 aa). ATP contacts are provided by residues Lys141, 178 to 179, Asp187, and 211 to 213; these read EY and RSN. Mg(2+)-binding residues include Asp248, Glu260, and Asn262. 3 residues coordinate Mn(2+): Asp248, Glu260, and Asn262.

This sequence belongs to the RimK family. The cofactor is Mg(2+). Requires Mn(2+) as cofactor.

This is Probable alpha-L-glutamate ligase from Pseudomonas entomophila (strain L48).